Here is a 597-residue protein sequence, read N- to C-terminus: UvrABC system protein C (597 aa).

The 79-residue stretch at 15–93 (DNPGVYQYYD…IKTLQPRYNV (79 aa)) folds into the GIY-YIG domain. A UVR domain is found at 207 to 242 (KESLKDFKKLMNNYAQNLQFEEAQKIKEKIEVLENY).

It belongs to the UvrC family. Interacts with UvrB in an incision complex.

The protein localises to the cytoplasm. In terms of biological role, the UvrABC repair system catalyzes the recognition and processing of DNA lesions. UvrC both incises the 5' and 3' sides of the lesion. The N-terminal half is responsible for the 3' incision and the C-terminal half is responsible for the 5' incision. The protein is UvrABC system protein C of Flavobacterium johnsoniae (strain ATCC 17061 / DSM 2064 / JCM 8514 / BCRC 14874 / CCUG 350202 / NBRC 14942 / NCIMB 11054 / UW101) (Cytophaga johnsonae).